Here is a 249-residue protein sequence, read N- to C-terminus: NADH dehydrogenase [ubiquinone] flavoprotein 2, mitochondrial (249 aa).

A mitochondrion-targeting transit peptide spans 1–32; that stretch reads MFFSAALRARAAGLTAQWGRHVRNLHKTAMQN. At Lys-61 the chain carries N6-acetyllysine. Cys-135, Cys-140, Cys-176, and Cys-180 together coordinate [2Fe-2S] cluster. Tyr-193 is modified (phosphotyrosine; by SRC). The interval 213–249 is disordered; that stretch reads IPKPGPRSGRFSCEPAGGLTSLTEPPKGPGFGVQAGL.

The protein belongs to the complex I 24 kDa subunit family. In terms of assembly, core subunit of respiratory chain NADH dehydrogenase (Complex I) which is composed of 45 different subunits. This is a component of the flavoprotein-sulfur (FP) fragment of the enzyme. [2Fe-2S] cluster serves as cofactor.

It localises to the mitochondrion inner membrane. It carries out the reaction a ubiquinone + NADH + 5 H(+)(in) = a ubiquinol + NAD(+) + 4 H(+)(out). Functionally, core subunit of the mitochondrial membrane respiratory chain NADH dehydrogenase (Complex I) which catalyzes electron transfer from NADH through the respiratory chain, using ubiquinone as an electron acceptor. Parts of the peripheral arm of the enzyme, where the electrons from NADH are accepted by flavin mononucleotide (FMN) and then passed along a chain of iron-sulfur clusters by electron tunnelling to the final acceptor ubiquinone. Contains one iron-sulfur cluster. The protein is NADH dehydrogenase [ubiquinone] flavoprotein 2, mitochondrial of Gorilla gorilla gorilla (Western lowland gorilla).